The sequence spans 943 residues: Translation initiation factor IF-2 (943 aa).

2 disordered regions span residues 96-229 and 243-352; these read FIKR…ERRR and AAPK…QRQQ. Over residues 104 to 116 the composition is skewed to low complexity; it reads DAPSDAAESAPSA. Composition is skewed to basic and acidic residues over residues 120–163 and 171–229; these read ELVR…EERA and AEKK…ERRR. Residues 278–293 show a composition bias toward low complexity; it reads ATGSGTGARAAAPSAP. Basic and acidic residues predominate over residues 313-323; that stretch reads TTKKKEIKTRG. Residues 443 to 612 form the tr-type G domain; the sequence is SRAPVVTVMG…LLQAEVLELK (170 aa). A G1 region spans residues 452–459; it reads GHVDHGKT. Residue 452–459 participates in GTP binding; sequence GHVDHGKT. The interval 477-481 is G2; that stretch reads GITQH. A G3 region spans residues 498–501; the sequence is DTPG. GTP is bound by residues 498 to 502 and 552 to 555; these read DTPGH and TKAD. The interval 552-555 is G4; it reads TKAD. Residues 588–590 form a G5 region; the sequence is SSK.

It belongs to the TRAFAC class translation factor GTPase superfamily. Classic translation factor GTPase family. IF-2 subfamily.

The protein resides in the cytoplasm. Functionally, one of the essential components for the initiation of protein synthesis. Protects formylmethionyl-tRNA from spontaneous hydrolysis and promotes its binding to the 30S ribosomal subunits. Also involved in the hydrolysis of GTP during the formation of the 70S ribosomal complex. The chain is Translation initiation factor IF-2 from Acidovorax sp. (strain JS42).